A 740-amino-acid chain; its full sequence is Phosphoribosylformylglycinamidine synthase subunit PurL (740 aa).

Histidine 50 is an active-site residue. The ATP site is built by tyrosine 53 and lysine 92. Glutamate 94 serves as a coordination point for Mg(2+). Residues 95–98 and arginine 117 contribute to the substrate site; that span reads SHNH. The active-site Proton acceptor is the histidine 96. Aspartate 118 is a Mg(2+) binding site. Glutamine 241 provides a ligand contact to substrate. A Mg(2+)-binding site is contributed by aspartate 269. Residue 313 to 315 coordinates substrate; it reads ESQ. 2 residues coordinate ATP: aspartate 495 and glycine 532. Mg(2+) is bound at residue asparagine 533. Position 535 (serine 535) interacts with substrate.

Belongs to the FGAMS family. As to quaternary structure, monomer. Part of the FGAM synthase complex composed of 1 PurL, 1 PurQ and 2 PurS subunits.

It localises to the cytoplasm. It carries out the reaction N(2)-formyl-N(1)-(5-phospho-beta-D-ribosyl)glycinamide + L-glutamine + ATP + H2O = 2-formamido-N(1)-(5-O-phospho-beta-D-ribosyl)acetamidine + L-glutamate + ADP + phosphate + H(+). The protein operates within purine metabolism; IMP biosynthesis via de novo pathway; 5-amino-1-(5-phospho-D-ribosyl)imidazole from N(2)-formyl-N(1)-(5-phospho-D-ribosyl)glycinamide: step 1/2. Functionally, part of the phosphoribosylformylglycinamidine synthase complex involved in the purines biosynthetic pathway. Catalyzes the ATP-dependent conversion of formylglycinamide ribonucleotide (FGAR) and glutamine to yield formylglycinamidine ribonucleotide (FGAM) and glutamate. The FGAM synthase complex is composed of three subunits. PurQ produces an ammonia molecule by converting glutamine to glutamate. PurL transfers the ammonia molecule to FGAR to form FGAM in an ATP-dependent manner. PurS interacts with PurQ and PurL and is thought to assist in the transfer of the ammonia molecule from PurQ to PurL. In Brucella abortus (strain S19), this protein is Phosphoribosylformylglycinamidine synthase subunit PurL.